The following is a 219-amino-acid chain: 2-phospho-L-lactate guanylyltransferase (219 aa).

This sequence belongs to the CofC family. In terms of assembly, homodimer.

The catalysed reaction is (2S)-2-phospholactate + GTP + H(+) = (2S)-lactyl-2-diphospho-5'-guanosine + diphosphate. The protein operates within cofactor biosynthesis; coenzyme F420 biosynthesis. Its function is as follows. Guanylyltransferase that catalyzes the activation of (2S)-2-phospholactate (2-PL) as (2S)-lactyl-2-diphospho-5'-guanosine, via the condensation of 2-PL with GTP. It is involved in the biosynthesis of coenzyme F420, a hydride carrier cofactor. The polypeptide is 2-phospho-L-lactate guanylyltransferase (Methanocaldococcus vulcanius (strain ATCC 700851 / DSM 12094 / M7) (Methanococcus vulcanius)).